The sequence spans 50 residues: Kappa-actitoxin-Bcs4a (50 aa).

It belongs to the sea anemone type 5 potassium channel toxin family. Contains 4 disulfide bonds.

It localises to the secreted. Its subcellular location is the nematocyst. In terms of biological role, inhibits voltage-gated potassium channels (Kv1/KCNA). Is potent on Drosophila Shaker IR channels (IC(50)=94.25 nM), and rKv1.2/KCNA2 (IC(50)=172.59 nM), and moderately active on hKv1.3/KCNA3 (IC(50)=1006.48 nM), rKv1.6/KCNA6 (IC(50)=2245.93 nM), and Kv1.1/KCNA1 (IC(50) around 3 uM). In vivo, induces a rapid increase in swimming speed on zebrafish larvae, as well as death which occurs between 2 and 18 hours later. Also paralyzes swimming crabs (C.danae) when injected at the junction between the body and the walking leg. This Bunodosoma caissarum (Sea anemone) protein is Kappa-actitoxin-Bcs4a.